A 669-amino-acid chain; its full sequence is DNA ligase 2 (669 aa).

NAD(+) is bound by residues 35-39 and 83-84; these read DKEYD and SL. The active-site N6-AMP-lysine intermediate is the lysine 125. NAD(+)-binding residues include arginine 147, glutamate 181, and lysine 317. Zn(2+)-binding residues include cysteine 410, cysteine 413, cysteine 426, and cysteine 432. One can recognise a BRCT domain in the interval 590–669; that stretch reads VVENAFTGKT…EEFEQLINNM (80 aa).

The protein belongs to the NAD-dependent DNA ligase family. LigA subfamily. It depends on Mg(2+) as a cofactor. Mn(2+) is required as a cofactor.

The enzyme catalyses NAD(+) + (deoxyribonucleotide)n-3'-hydroxyl + 5'-phospho-(deoxyribonucleotide)m = (deoxyribonucleotide)n+m + AMP + beta-nicotinamide D-nucleotide.. In terms of biological role, DNA ligase that catalyzes the formation of phosphodiester linkages between 5'-phosphoryl and 3'-hydroxyl groups in double-stranded DNA using NAD as a coenzyme and as the energy source for the reaction. It is essential for DNA replication and repair of damaged DNA. The protein is DNA ligase 2 of Clostridium acetobutylicum (strain ATCC 824 / DSM 792 / JCM 1419 / IAM 19013 / LMG 5710 / NBRC 13948 / NRRL B-527 / VKM B-1787 / 2291 / W).